A 1330-amino-acid polypeptide reads, in one-letter code: Sister chromatid cohesion protein PDS5 homolog A (1330 aa).

The stretch at 387–423 (SLVNDQLLGFVRERTLDKRWRVRKEAMMGLAQLYKKY) is one HEAT repeat. Residues 1138–1330 (VNKPLSATGR…AAQRQIDLQR (193 aa)) are disordered. The span at 1160-1171 (SNISVNSELSSS) shows a compositional bias: low complexity. A compositionally biased stretch (polar residues) spans 1216-1225 (SDQATQGNST).

The protein belongs to the PDS5 family. Interacts with the cohesin complex. Binds chromatin in a cohesin-dependent manner.

The protein localises to the nucleus. Functionally, may regulate sister chromatid cohesion during mitosis and couple it to DNA replication. This Gallus gallus (Chicken) protein is Sister chromatid cohesion protein PDS5 homolog A.